The sequence spans 407 residues: POC1 centriolar protein homolog A (407 aa).

7 WD repeats span residues 17-56 (GHRDAVTSVDFSLNTKQLASGSMDSCLMVWHMKPQTRAYR), 59-98 (GHKDAVTCVNFSPSGHLLASGSRDKTVRIWVPNVKGESTV), 101-140 (AHTATVRSVHFCSDGQSFVTASDDKTVKVWSTHRQKFLFS), 143-182 (QHINWVRCAKFSPDGRLIVSASDDKTVKLWDKTSRECVHS), 185-224 (EHGGFVTYVDFHPSGTCIAAAGMDNTVKVWDVRTHRLLQH), 227-266 (LHSAAVNALSFHPSGNYLVTASSDSTLKILDLMEGRLLYT), and 269-308 (GHQGPATTVAFSRTGEYFASGGSDEQVMVWKSNFDIVDYG). The tract at residues 317–357 (PATRASSSGTLPEVDPLVPPGRGRSQESMQSHSQEPVSVPQ) is disordered. Polar residues predominate over residues 342–357 (QESMQSHSQEPVSVPQ). The stretch at 369-397 (QLDVLTQTVSILEQRLTLTEDKLKQCLEN) forms a coiled coil.

It belongs to the WD repeat POC1 family. In terms of assembly, interacts with POC1B.

It is found in the cytoplasm. The protein resides in the cytoskeleton. It localises to the microtubule organizing center. Its subcellular location is the centrosome. The protein localises to the centriole. It is found in the cilium basal body. The protein resides in the spindle pole. Plays an important role in centriole assembly and/or stability and ciliogenesis. Involved in early steps of centriole duplication, as well as in the later steps of centriole length control. Acts in concert with POC1B to ensure centriole integrity and proper mitotic spindle formation. The polypeptide is POC1 centriolar protein homolog A (POC1A) (Bos taurus (Bovine)).